A 416-amino-acid polypeptide reads, in one-letter code: Probable tRNA pseudouridine synthase D (416 aa).

Residue Asp-83 is the Nucleophile of the active site. The 222-residue stretch at 158-379 (GFPNYFGYQR…PGGRRELLIR (222 aa)) folds into the TRUD domain.

Belongs to the pseudouridine synthase TruD family.

The enzyme catalyses uridine(13) in tRNA = pseudouridine(13) in tRNA. Functionally, could be responsible for synthesis of pseudouridine from uracil-13 in transfer RNAs. This Thermococcus onnurineus (strain NA1) protein is Probable tRNA pseudouridine synthase D.